A 401-amino-acid polypeptide reads, in one-letter code: S-adenosylmethionine synthase (401 aa).

H16 lines the ATP pocket. D18 serves as a coordination point for Mg(2+). Residue E44 participates in K(+) binding. The L-methionine site is built by E57 and Q100. The segment at 100 to 110 is flexible loop; sequence QSPDIAQGVNE. ATP is bound by residues 174 to 176, 241 to 242, D250, 256 to 257, A273, and K277; these read DAK, RF, and RK. Position 250 (D250) interacts with L-methionine. K281 provides a ligand contact to L-methionine.

Belongs to the AdoMet synthase family. Homotetramer; dimer of dimers. Mg(2+) serves as cofactor. K(+) is required as a cofactor.

The protein resides in the cytoplasm. The enzyme catalyses L-methionine + ATP + H2O = S-adenosyl-L-methionine + phosphate + diphosphate. It participates in amino-acid biosynthesis; S-adenosyl-L-methionine biosynthesis; S-adenosyl-L-methionine from L-methionine: step 1/1. In terms of biological role, catalyzes the formation of S-adenosylmethionine (AdoMet) from methionine and ATP. The overall synthetic reaction is composed of two sequential steps, AdoMet formation and the subsequent tripolyphosphate hydrolysis which occurs prior to release of AdoMet from the enzyme. The sequence is that of S-adenosylmethionine synthase from Streptococcus equi subsp. zooepidemicus (strain H70).